We begin with the raw amino-acid sequence, 370 residues long: Aminomethyltransferase (370 aa).

The protein belongs to the GcvT family. In terms of assembly, the glycine cleavage system is composed of four proteins: P, T, L and H.

The catalysed reaction is N(6)-[(R)-S(8)-aminomethyldihydrolipoyl]-L-lysyl-[protein] + (6S)-5,6,7,8-tetrahydrofolate = N(6)-[(R)-dihydrolipoyl]-L-lysyl-[protein] + (6R)-5,10-methylene-5,6,7,8-tetrahydrofolate + NH4(+). The glycine cleavage system catalyzes the degradation of glycine. This chain is Aminomethyltransferase, found in Prochlorococcus marinus (strain MIT 9515).